A 388-amino-acid polypeptide reads, in one-letter code: Outer membrane protein assembly factor BamB (388 aa).

A signal peptide spans 1-21 (MILGWTQRIFTLLVVVTLLAA). Cys22 carries N-palmitoyl cysteine lipidation. Residue Cys22 is the site of S-diacylglycerol cysteine attachment.

Belongs to the BamB family. In terms of assembly, part of the Bam complex.

Its subcellular location is the cell outer membrane. In terms of biological role, part of the outer membrane protein assembly complex, which is involved in assembly and insertion of beta-barrel proteins into the outer membrane. The protein is Outer membrane protein assembly factor BamB of Kangiella koreensis (strain DSM 16069 / JCM 12317 / KCTC 12182 / SW-125).